Here is a 171-residue protein sequence, read N- to C-terminus: Endoribonuclease YbeY (171 aa).

Positions 126, 130, and 136 each coordinate Zn(2+).

The protein belongs to the endoribonuclease YbeY family. It depends on Zn(2+) as a cofactor.

The protein localises to the cytoplasm. Functionally, single strand-specific metallo-endoribonuclease involved in late-stage 70S ribosome quality control and in maturation of the 3' terminus of the 16S rRNA. This chain is Endoribonuclease YbeY, found in Rhizobium johnstonii (strain DSM 114642 / LMG 32736 / 3841) (Rhizobium leguminosarum bv. viciae).